A 363-amino-acid polypeptide reads, in one-letter code: NAD(P)H-quinone oxidoreductase subunit 1, chloroplastic (363 aa).

A run of 7 helical transmembrane segments spans residues 30–50, 98–118, 129–149, 165–185, 253–273, 303–323, and 336–356; these read LVPILTLVVGITIGVLVIVWL, FSIGPSMAVISILLSYSVIPF, VGVFLWIAISSIAPIGLLMSG, AAQSISYEIPLTLCVLSISLL, FAFFYITSYFNLLVSSLFVTI, TTTELFITLAKTFFFLFISIT, and LLNLGWKFLLPISLGNLLLTT.

Belongs to the complex I subunit 1 family. NDH is composed of at least 16 different subunits, 5 of which are encoded in the nucleus.

Its subcellular location is the plastid. It is found in the chloroplast thylakoid membrane. The catalysed reaction is a plastoquinone + NADH + (n+1) H(+)(in) = a plastoquinol + NAD(+) + n H(+)(out). It catalyses the reaction a plastoquinone + NADPH + (n+1) H(+)(in) = a plastoquinol + NADP(+) + n H(+)(out). Its function is as follows. NDH shuttles electrons from NAD(P)H:plastoquinone, via FMN and iron-sulfur (Fe-S) centers, to quinones in the photosynthetic chain and possibly in a chloroplast respiratory chain. The immediate electron acceptor for the enzyme in this species is believed to be plastoquinone. Couples the redox reaction to proton translocation, and thus conserves the redox energy in a proton gradient. The protein is NAD(P)H-quinone oxidoreductase subunit 1, chloroplastic of Pelargonium hortorum (Common geranium).